The chain runs to 1549 residues: MALFRALYIIWVFLLIPLSNAEEFTPKVTRTLSRYVFDIVNFDDSNTLIRAEEDSVEISFDAGENWKTIDEIEEPIESFVVDPFRGHDRAFAFVKTAPKFYVTDDQGKSWRPLTIPISEKASNYFCDVTTHPIKKKHLIIRCDLLTIKNSGLMYVGREIYTTNDGVSFSQVKPSFGKIDGHISTARCDFIKSSEDSDLGGNDASILCLFRNTEYIESTGSTIDKSELILSADGGETFKELVQFKDKVVSRYEILKHHVIVLTQDDMYNEMSSTNIWISNDVSTFQVARTPTKIRHVNMGQIHEDSIGRIVLPVSRERDDEDSNQPGAAEVLISDSEGLKFLPINWIPNNQFGYINVAYPGFLKGTFFGSFHPFIEYSDRKRKYSRQKVREETKVSVDNGLTWTNLKVVDRENVDLFGCDVTKPERCSLQTHFYDLRNLNPSAGIMMISGIVGDGSAYNWKEEKTFISRDSGLTWRLVHNSTGLYTTGDLGNIIMYIPYRSNENGDVPSKFYYSLDQGKTWGEYDLIMPIYPYRLVSTISDGSGSKFILTGTSITEDPIFITYSIDFSAVFDYKSCEEGDFEDWNLADGKCVNGAKYKYRRRKQDAQCLVKKAFKDLSLDETPCNSCTGSDYECSFEFVRDAKGDCIPDYNLIALSDICDKSKGKSVLVKPLQLIKGDKCKTPMKIESVDIPCDEIPKEGSSDKEIVTTENKFDFEIKFYQYFDTVADESLVMLNSIGDAYISHDGGQTIKRFDTDGEKIVEIVFNPYFNSSAYLFGSKGNIFLTHDRGYSFMIAKLPEARQLGMPLDFSAKAQDTFIYYGGKNCESILSPECHAVAYLTKDGGETFTEMLDNAIHCEFAGTLFKYPSNDDMVMCQVKEKFSQTRSLVSSTDFFQDDRKTVFENIIGYLSTGGYIIVAVPHEDNELRAYVTNDGAEFTEAKFPYDEDIGKQDAFTILGSEEGSIFLHLATNLESGHDFGNLLKSNSNGTSFVTLEHAVNRNTFGYVDFEKVQGLEGIIITNIVSNSEKVGENKEDEQLKTKITFNDGSDWNFLKPPKKDSEGKKFPCDSVSLDKCSLHLHGYTERKDIRDTYSSGSALGMMFGVGNVGDRLLPYEECSTFLTTDGGETWTEVKKGPHQWEYGDHGGVLVLVPENAETDSISYSTDFGKTWKDYKFCGDKVLVKDIITVPRDSALRFLLFGEAKNMGSGSFRTYTIDFRNIFERQCEFDITGRKRADFKYSPLGSRTGCLFGHKTEFLRKTDEKCFIGNIPLSEFSRNVKNCPCTRQDFECDYNFYKASDGTCKLVKGLSSANGADICKKEPDLIEYYDSSGYRKIPLSTCKGGLKLDAHLAPHPCPGKEKAFREKYSINTGAYALVFVTILLVIFFVAWFVYDRGIRRNGGFSRFEEIRLGDDGLIENNRTDRVVNIIVRLGLCISLITKSAFQRAKAGTAQLSSKFRARFGNKKGATYSSLLHDQLSDEPDGFHEDSNDLSSFRGQGSNSEIEQEDVDTSQQEHTLRTDLLGASNIPDALPARSASHESDLAAARSEDK.

Positions Met1–Ala21 are cleaved as a signal peptide. The Lumenal portion of the chain corresponds to Glu22–Thr1369. BNR repeat units lie at residues Glu57 to Thr68, Tyr101 to Pro112, Ile159 to Gln170, Ile228 to Glu239, Lys393 to Asn404, and Phe465 to Leu476. Asn479 is a glycosylation site (N-linked (GlcNAc...) asparagine). BNR repeat units lie at residues Tyr511–Glu522 and Tyr740–Arg751. A glycan (N-linked (GlcNAc...) asparagine) is linked at Asn769. A BNR 9 repeat occupies Tyr837–Glu848. N-linked (GlcNAc...) asparagine glycosylation is present at Asn986. BNR repeat units follow at residues Lys1040–Phe1051, Phe1119–Glu1130, and Ser1160–Asp1171. A helical membrane pass occupies residues Gly1370–Val1390. The Cytoplasmic segment spans residues Tyr1391–Lys1549. The interval Glu1479 to Lys1549 is disordered. Residues Asp1489 to Glu1501 show a composition bias toward polar residues. Over residues Ala1535–Lys1549 the composition is skewed to basic and acidic residues.

This sequence belongs to the VPS10-related sortilin family.

The protein localises to the golgi apparatus. The protein resides in the trans-Golgi network membrane. It localises to the endosome membrane. Functionally, functions as a sorting receptor in the Golgi compartment required for the intracellular sorting and delivery of soluble vacuolar proteins, like carboxypeptidase Y (CPY) and proteinase A. This is VPS10 homolog 1 (VTH1) from Saccharomyces cerevisiae (strain ATCC 204508 / S288c) (Baker's yeast).